The chain runs to 301 residues: D-alanine--D-alanine ligase (301 aa).

One can recognise an ATP-grasp domain in the interval 99-294 (KSVLEANGIR…FSELIDMIIQ (196 aa)). 126-181 (INELGYPVVVKPTHGGSSVATFIVKEEKEIENCVSEAFKWDSEVMIEKFIKGDEIT) is a binding site for ATP. Residues Asp248, Glu261, and Asn263 each contribute to the Mg(2+) site.

Belongs to the D-alanine--D-alanine ligase family. Mg(2+) is required as a cofactor. Requires Mn(2+) as cofactor.

Its subcellular location is the cytoplasm. It carries out the reaction 2 D-alanine + ATP = D-alanyl-D-alanine + ADP + phosphate + H(+). The protein operates within cell wall biogenesis; peptidoglycan biosynthesis. In terms of biological role, cell wall formation. The protein is D-alanine--D-alanine ligase of Clostridium beijerinckii (strain ATCC 51743 / NCIMB 8052) (Clostridium acetobutylicum).